Here is a 679-residue protein sequence, read N- to C-terminus: Glycine--tRNA ligase beta subunit (679 aa).

The protein belongs to the class-II aminoacyl-tRNA synthetase family. In terms of assembly, tetramer of two alpha and two beta subunits.

Its subcellular location is the cytoplasm. It carries out the reaction tRNA(Gly) + glycine + ATP = glycyl-tRNA(Gly) + AMP + diphosphate. The polypeptide is Glycine--tRNA ligase beta subunit (Streptococcus agalactiae serotype V (strain ATCC BAA-611 / 2603 V/R)).